We begin with the raw amino-acid sequence, 536 residues long: MALGAAYHHYLQLAGDHGTATHALLLGVLIFLVIRLVSARRTGTTSANKRKQQQRLPLPPWPPGKLPIIGHLHLIGAETHISIRDLDAKHGRNGLLLLRIGAVPTLFVSSPSAADAVLRTQDHIFASRPPWMAAEIIRYGPSDVAFVPYGEYGRQGRKLLTTHMLSTKKVQSFRHGRQEEVRLVMDKIRAAATAAPPAAVDLSDLLSGYTNDVVSRAVLGASHRNQGRNRLFSELTEINVSLLAGFNLEDYFPPNMAMADVLLRLVSVKARRLNQRWNDVFDELIQEHVQSRPSGESEESEADFIHVLLSIQQEYGLTTDNLKAILVDMFEAGIETSYLTLEYGMAELINNRHVMEKLQTEVRTTMGSPDGKKLDMLAEEDLGSMPYLKATIKETLRLHPPAPFLLPHYSTADSEIDGYFVPAGTRVLVHAWALGRDRTTWEKPEEFMPERFVQEPGAVDVHMKGKDLRFIPFGSGRRICPGMNFGFATMEVMLANLMYHFDWEVPGSGAGVSMEESFGLTLRRKEKLLLVPRIAS.

The helical transmembrane segment at 18–34 (GTATHALLLGVLIFLVI) threads the bilayer. Cys-480 is a heme binding site.

It belongs to the cytochrome P450 family. Requires heme as cofactor.

The protein resides in the membrane. It carries out the reaction indolin-2-one + reduced [NADPH--hemoprotein reductase] + O2 = 3-hydroxyindolin-2-one + oxidized [NADPH--hemoprotein reductase] + H2O + H(+). Its pathway is secondary metabolite biosynthesis; 2,4-dihydroxy-1,4-benzoxazin-3-one biosynthesis; 2,4-dihydroxy-1,4-benzoxazin-3-one from indoleglycerol phosphate: step 3/5. Functionally, catalyzes the conversion of indolin-2-one to 3-hydroxyindolin-2-one. The polypeptide is Indolin-2-one monooxygenase (CYP71C2) (Zea mays (Maize)).